A 396-amino-acid chain; its full sequence is MKKLVILGSTGSIGKSTLSVVEQNKTEYEVFGLVGGKNVELMAAQCLLFQPKFAALDDENAAKALEEQLRQLNVKTEVLSGQKAICELSAHPEVDMVMAAIVGAAGLLPTLSAVKAGKKVLLANKESLVTCGQIFIDEARKSGAQLLPVDSEHNAIFQSLPPEAQQKVGFCPLAELGVSKIILTGSGGPFRVKPLDEFAAITPAQAVAHPNWSMGKKISVDSATMMNKGLEYIEARWLFNASAEEMEIIIHPQSIIHSMVRYIDGSVIAQMGNPDMCTPIAHTMAYPKRINAGVAPLDFFKLKELTFIEPDFARYPNLKLAIDAFAEGQYATTAMNAANEVAVEAFLNERIRFIDIVNVNRTVVENIAPVQVKEIADVLHIDKLARELAEQAVINL.

Residues threonine 10, glycine 11, serine 12, isoleucine 13, glycine 36, lysine 37, asparagine 38, and asparagine 124 each contribute to the NADPH site. Lysine 125 contacts 1-deoxy-D-xylulose 5-phosphate. Residue glutamate 126 coordinates NADPH. A Mn(2+)-binding site is contributed by aspartate 150. The 1-deoxy-D-xylulose 5-phosphate site is built by serine 151, glutamate 152, serine 186, and histidine 209. Glutamate 152 provides a ligand contact to Mn(2+). Glycine 215 contacts NADPH. 1-deoxy-D-xylulose 5-phosphate-binding residues include serine 222, asparagine 227, lysine 228, and glutamate 231. Glutamate 231 is a binding site for Mn(2+).

It belongs to the DXR family. Mg(2+) is required as a cofactor. Mn(2+) serves as cofactor.

The enzyme catalyses 2-C-methyl-D-erythritol 4-phosphate + NADP(+) = 1-deoxy-D-xylulose 5-phosphate + NADPH + H(+). Its pathway is isoprenoid biosynthesis; isopentenyl diphosphate biosynthesis via DXP pathway; isopentenyl diphosphate from 1-deoxy-D-xylulose 5-phosphate: step 1/6. Its function is as follows. Catalyzes the NADPH-dependent rearrangement and reduction of 1-deoxy-D-xylulose-5-phosphate (DXP) to 2-C-methyl-D-erythritol 4-phosphate (MEP). The polypeptide is 1-deoxy-D-xylulose 5-phosphate reductoisomerase (Actinobacillus pleuropneumoniae serotype 3 (strain JL03)).